Consider the following 228-residue polypeptide: Histidine decarboxylase (228 aa).

His30 lines the substrate pocket. N6-(pyridoxal phosphate)lysine is present on Lys143.

The protein belongs to the group II decarboxylase family. In terms of assembly, homotetramer. Pyridoxal 5'-phosphate is required as a cofactor.

The catalysed reaction is L-histidine + H(+) = histamine + CO2. This is Histidine decarboxylase (hdc) from Raoultella ornithinolytica (Klebsiella ornithinolytica).